A 78-amino-acid polypeptide reads, in one-letter code: DNA-directed RNA polymerase subunit Rpo5 (78 aa).

It belongs to the archaeal Rpo5/eukaryotic RPB5 RNA polymerase subunit family. In terms of assembly, part of the RNA polymerase complex.

It is found in the cytoplasm. It catalyses the reaction RNA(n) + a ribonucleoside 5'-triphosphate = RNA(n+1) + diphosphate. Its function is as follows. DNA-dependent RNA polymerase (RNAP) catalyzes the transcription of DNA into RNA using the four ribonucleoside triphosphates as substrates. This chain is DNA-directed RNA polymerase subunit Rpo5, found in Methanococcus maripaludis (strain C6 / ATCC BAA-1332).